The sequence spans 337 residues: Fructose-1,6-bisphosphatase class 1 (337 aa).

Residues glutamate 94, aspartate 116, leucine 118, and aspartate 119 each contribute to the Mg(2+) site. Residues 119 to 122, asparagine 210, and lysine 276 contribute to the substrate site; that span reads DGSS. Position 282 (glutamate 282) interacts with Mg(2+).

Belongs to the FBPase class 1 family. As to quaternary structure, homotetramer. Mg(2+) serves as cofactor.

It localises to the cytoplasm. It catalyses the reaction beta-D-fructose 1,6-bisphosphate + H2O = beta-D-fructose 6-phosphate + phosphate. It functions in the pathway carbohydrate biosynthesis; gluconeogenesis. This chain is Fructose-1,6-bisphosphatase class 1, found in Burkholderia lata (strain ATCC 17760 / DSM 23089 / LMG 22485 / NCIMB 9086 / R18194 / 383).